The following is a 277-amino-acid chain: Indole-3-glycerol phosphate synthase (277 aa).

This sequence belongs to the TrpC family.

It catalyses the reaction 1-(2-carboxyphenylamino)-1-deoxy-D-ribulose 5-phosphate + H(+) = (1S,2R)-1-C-(indol-3-yl)glycerol 3-phosphate + CO2 + H2O. It functions in the pathway amino-acid biosynthesis; L-tryptophan biosynthesis; L-tryptophan from chorismate: step 4/5. This is Indole-3-glycerol phosphate synthase from Pseudomonas putida (strain W619).